The following is a 551-amino-acid chain: Putative transport protein CGSHiGG_02670 (551 aa).

Helical transmembrane passes span 4-24 (IAITISLLALVAVIGLWIGHW), 28-48 (GVGLGIGGVLFGGIIVAHFTN), 65-85 (FGLILFVYTIGIQVGPGFFSS), 95-115 (AFAILIIVLGSIAVVLVHKIA), and 157-177 (VSYAMAYPFGICGILLAMWLI). RCK C-terminal domains are found at residues 191–275 (RFNA…IIGH) and 277–360 (VDAP…VIGN). Helical transmembrane passes span 370–390 (MLPVFIGIGLGVLVGSIPFYI), 402–424 (AGGPLVVALILARIGTIGKLYWF), 438–458 (IVLFLAVVGLKSGGSFFDTLV), 463–483 (LEWMGYGIFITFVPLIIVGTI), 492–512 (YLTICGLLAGSMTDPPALAFA), and 529–549 (VYPLVMFLRIMSPQLLAVLLW).

Belongs to the AAE transporter (TC 2.A.81) family. YidE subfamily.

It is found in the cell membrane. This Haemophilus influenzae (strain PittGG) protein is Putative transport protein CGSHiGG_02670.